The chain runs to 194 residues: Peptidyl-tRNA hydrolase (194 aa).

Position 17 (Y17) interacts with tRNA. H22 (proton acceptor) is an active-site residue. Residues F68, N70, and N116 each coordinate tRNA.

This sequence belongs to the PTH family. As to quaternary structure, monomer.

It localises to the cytoplasm. It carries out the reaction an N-acyl-L-alpha-aminoacyl-tRNA + H2O = an N-acyl-L-amino acid + a tRNA + H(+). Hydrolyzes ribosome-free peptidyl-tRNAs (with 1 or more amino acids incorporated), which drop off the ribosome during protein synthesis, or as a result of ribosome stalling. Functionally, catalyzes the release of premature peptidyl moieties from peptidyl-tRNA molecules trapped in stalled 50S ribosomal subunits, and thus maintains levels of free tRNAs and 50S ribosomes. This is Peptidyl-tRNA hydrolase from Actinobacillus pleuropneumoniae serotype 5b (strain L20).